Reading from the N-terminus, the 123-residue chain is Large ribosomal subunit protein uL22c (123 aa).

It belongs to the universal ribosomal protein uL22 family. In terms of assembly, part of the 50S ribosomal subunit.

The protein localises to the plastid. Its subcellular location is the chloroplast. Functionally, this protein binds specifically to 23S rRNA. In terms of biological role, the globular domain of the protein is located near the polypeptide exit tunnel on the outside of the subunit, while an extended beta-hairpin is found that lines the wall of the exit tunnel in the center of the 70S ribosome. This is Large ribosomal subunit protein uL22c (rpl22) from Illicium oligandrum (Star anise).